Here is a 1024-residue protein sequence, read N- to C-terminus: Myosin phosphatase Rho-interacting protein (1024 aa).

An interaction with F-actin region spans residues 1 to 382; sequence MSAAKENPCR…DRRSTESSMT (382 aa). A PH 1 domain is found at 43–150; it reads KPIYGGWLLL…WLEMLMVYPR (108 aa). Residues 152–262 are disordered; the sequence is NKQNQKKKRK…GDRVDGGRKV (111 aa). A compositionally biased stretch (low complexity) spans 179–190; that stretch reads SSSGGSSGSSSS. Phosphoserine is present on residues serine 193, serine 219, serine 221, serine 225, and serine 227. The span at 221-233 shows a compositional bias: low complexity; that stretch reads SPAQSPSQSQPPA. Positions 240–262 are enriched in basic and acidic residues; the sequence is PGLESKEDESTISGDRVDGGRKV. 4 positions are modified to phosphoserine: serine 266, serine 270, serine 289, and serine 292. 2 disordered regions span residues 274 to 301 and 328 to 379; these read AKQDLRAEEQLPPLLSPPSPSTPHSRRS and PSSD…STES. A Phosphothreonine modification is found at threonine 295. The span at 333-349 shows a compositional bias: basic and acidic residues; that stretch reads RQGRSERRAIPRKRDFA. Serine 364 bears the Phosphoserine mark. Positions 386-482 constitute a PH 2 domain; sequence LNFKKGWLTK…WIQTIMKHVL (97 aa). A disordered region spans residues 486–583; it reads APDVTSSLPE…AEPGELERER (98 aa). Polar residues predominate over residues 488–508; sequence DVTSSLPEGKNKSTSFETCSR. Serine 492 carries the post-translational modification Phosphoserine. Positions 522 to 545 are enriched in basic and acidic residues; that stretch reads PEQKKSRARERRREGRSKTFDWAE. An interaction with RHOA region spans residues 545 to 823; sequence EFRPIQQALA…SVQRELEVLS (279 aa). At serine 617 the chain carries Phosphoserine. Threonine 645 carries the phosphothreonine modification. Positions 672–976 form a coiled coil; sequence HELTSLLEKE…AATEALGEKS (305 aa). Serine 799 bears the Phosphoserine mark. The interaction with PPP1R12A stretch occupies residues 823–878; sequence SEQYSQKCLENAHLAQALEAERQALRQCQRENQELNAHNQELNNRLAAEITRLRTL. Residues 972–995 are disordered; the sequence is LGEKSPEGTTVSGYDIMKSKSNPD. A phosphoserine mark is found at serine 976, glycine 979, serine 992, serine 1013, and serine 1015.

As to quaternary structure, binds RHOA, PPP1R12A/MBS and PPP1R12C/MBS85 through adjacent coiled coil domains. Interacts with MYZAP. Binds F-actin through its N-terminus. Expressed in Kidney, Brain, Heart and Lung.

It is found in the cytoplasm. It localises to the cytoskeleton. Targets myosin phosphatase to the actin cytoskeleton. Required for the regulation of the actin cytoskeleton by RhoA and ROCK1. Depletion leads to an increased number of stress fibers in smooth muscle cells through stabilization of actin fibers by phosphorylated myosin. Overexpression of MRIP as well as its F-actin-binding region leads to disassembly of stress fibers in neuronal cells. The chain is Myosin phosphatase Rho-interacting protein (Mprip) from Mus musculus (Mouse).